Consider the following 285-residue polypeptide: UstYa family oxidase phomYe (285 aa).

Residues 32–54 (LFYGWKGIAFLSTLTNVLFISGF) form a helical membrane-spanning segment. A disordered region spans residues 143-165 (YGFGTPLTGPGSEGNEHDPTPWT). Positions 177–181 (HQLHC) match the HXXHC 1 motif. An N-linked (GlcNAc...) asparagine glycan is attached at asparagine 202. Positions 209 to 213 (HVDHC) match the HXXHC 2 motif.

This sequence belongs to the ustYa family.

It is found in the membrane. The protein operates within mycotoxin biosynthesis. Its function is as follows. UstYa family oxidase; part of the gene cluster that mediates the biosynthesis of the phomopsins, a group of hexapeptide mycotoxins which infects lupins and causes lupinosis disease in livestock. Within the pathway, phomYe catalyzes the desaturation of the Pro moiety into 3,4-dehydroproline (dPro). The pathway starts with the processing of the precursor phomA by several endopeptidases including kexin proteases as well as the cluster-specific S41 family peptidase phomP1 and the oligopeptidase phomG to produce 10 identical copies of the hexapeptide Tyr-Val-Ile-Pro-Ile-Asp. After being excised from the precursor peptide, the core peptides are cyclized and modified post-translationally by enzymes encoded within the gene cluster. The timing and order of proteolysis of the phomA precursor and PTMs are still unknown. Two tyrosinase-like enzymes, phomQ1 and phomQ2, catalyze the chlorination and hydroxylation of Tyr, respectively. PhomYb, is proposed to be involved in the construction of the macrocyclic structure. The other 4 ustYa family proteins may be involved in PTMs that generate the unique structure of phomopsin A. PhomYa is required for the hydroxylation of C-beta of Tyr. PhomYc, phomYd, and phomYe are responsible for the biosynthesis of 2,3-dehydroisoleucine (dIle), 2,3-dehydroaspartic acid (dAsp), and 3,4-dehydroproline (dPro), respectively. While dIle formation by phomYc is indispensable for the installation of dAsp by phomYd, the order of the other PTMs have not been elucidated yet. Most of the biosynthetic enzymes likely have broad substrate specificity, and thus, there might be a metabolic grid from a precursor to phomopsin A. The enzyme(s) responsible for the biosynthesis of 3,4-dehydrovaline (dVal) have also not been identified yet. Finally, phomM acts as an S-adenosylmethionine-dependent alpha-N-methyltransferase that catalyzes two successive N-methylation reactions, converting N-desmethyl-phomopsin A to phomopsin A and phomopsin A further to an N,N-dimethylated congener called phomopsin E. The polypeptide is UstYa family oxidase phomYe (Diaporthe leptostromiformis (Lupinosis disease fungus)).